Reading from the N-terminus, the 517-residue chain is Crotonobetaine/carnitine--CoA ligase (517 aa).

Belongs to the ATP-dependent AMP-binding enzyme family.

The enzyme catalyses 4-(trimethylamino)butanoate + ATP + CoA = 4-(trimethylamino)butanoyl-CoA + AMP + diphosphate. It catalyses the reaction crotonobetaine + ATP + CoA = crotonobetainyl-CoA + AMP + diphosphate. The catalysed reaction is (R)-carnitine + ATP + CoA = (R)-carnitinyl-CoA + AMP + diphosphate. The protein operates within amine and polyamine metabolism; carnitine metabolism. Its function is as follows. Catalyzes the transfer of CoA to carnitine, generating the initial carnitinyl-CoA needed for the CaiB reaction cycle. Also has activity toward crotonobetaine and gamma-butyrobetaine. In Escherichia coli O1:K1 / APEC, this protein is Crotonobetaine/carnitine--CoA ligase.